The sequence spans 235 residues: Phosphoribosylaminoimidazole-succinocarboxamide synthase (235 aa).

The protein belongs to the SAICAR synthetase family.

It catalyses the reaction 5-amino-1-(5-phospho-D-ribosyl)imidazole-4-carboxylate + L-aspartate + ATP = (2S)-2-[5-amino-1-(5-phospho-beta-D-ribosyl)imidazole-4-carboxamido]succinate + ADP + phosphate + 2 H(+). Its pathway is purine metabolism; IMP biosynthesis via de novo pathway; 5-amino-1-(5-phospho-D-ribosyl)imidazole-4-carboxamide from 5-amino-1-(5-phospho-D-ribosyl)imidazole-4-carboxylate: step 1/2. This is Phosphoribosylaminoimidazole-succinocarboxamide synthase from Sulfolobus acidocaldarius (strain ATCC 33909 / DSM 639 / JCM 8929 / NBRC 15157 / NCIMB 11770).